The chain runs to 404 residues: Acetylornithine/succinyldiaminopimelate aminotransferase (404 aa).

Pyridoxal 5'-phosphate contacts are provided by residues 108–109 and Phe-141; that span reads GA. Arg-144 contributes to the N(2)-acetyl-L-ornithine binding site. Pyridoxal 5'-phosphate is bound at residue 226–229; sequence DEIQ. Residue Lys-255 is modified to N6-(pyridoxal phosphate)lysine. Thr-283 is a binding site for N(2)-acetyl-L-ornithine. Thr-284 is a pyridoxal 5'-phosphate binding site.

This sequence belongs to the class-III pyridoxal-phosphate-dependent aminotransferase family. ArgD subfamily. In terms of assembly, homodimer. Pyridoxal 5'-phosphate is required as a cofactor.

It localises to the cytoplasm. It catalyses the reaction N(2)-acetyl-L-ornithine + 2-oxoglutarate = N-acetyl-L-glutamate 5-semialdehyde + L-glutamate. The catalysed reaction is N-succinyl-(2S,6S)-2,6-diaminopimelate + 2-oxoglutarate = (S)-2-succinylamino-6-oxoheptanedioate + L-glutamate. It functions in the pathway amino-acid biosynthesis; L-arginine biosynthesis; N(2)-acetyl-L-ornithine from L-glutamate: step 4/4. The protein operates within amino-acid biosynthesis; L-lysine biosynthesis via DAP pathway; LL-2,6-diaminopimelate from (S)-tetrahydrodipicolinate (succinylase route): step 2/3. In terms of biological role, involved in both the arginine and lysine biosynthetic pathways. This Buchnera aphidicola subsp. Schizaphis graminum (strain Sg) protein is Acetylornithine/succinyldiaminopimelate aminotransferase.